The primary structure comprises 409 residues: ATPase ASNA1 homolog (409 aa).

ATP is bound at residue 21 to 28 (KGGVGKTT). Asp62 is a catalytic residue. Residues Glu303 and Asn330 each coordinate ATP. Cys342 and Cys345 together coordinate Zn(2+).

Belongs to the arsA ATPase family. In terms of assembly, homodimer.

It is found in the cytoplasm. The protein resides in the endoplasmic reticulum. In terms of biological role, ATPase required for the post-translational delivery of tail-anchored (TA) proteins to the endoplasmic reticulum. Recognizes and selectively binds the transmembrane domain of TA proteins in the cytosol. This complex then targets to the endoplasmic reticulum by membrane-bound receptors, where the tail-anchored protein is released for insertion. This process is regulated by ATP binding and hydrolysis. ATP binding drives the homodimer towards the closed dimer state, facilitating recognition of newly synthesized TA membrane proteins. ATP hydrolysis is required for insertion. Subsequently, the homodimer reverts towards the open dimer state, lowering its affinity for the membrane-bound receptor, and returning it to the cytosol to initiate a new round of targeting. This Leishmania major protein is ATPase ASNA1 homolog.